Consider the following 132-residue polypeptide: Translation initiation factor 5A (132 aa).

Lys36 carries the post-translational modification Hypusine.

Belongs to the eIF-5A family.

It is found in the cytoplasm. Functionally, functions by promoting the formation of the first peptide bond. The sequence is that of Translation initiation factor 5A (eIF5A) from Caldivirga maquilingensis (strain ATCC 700844 / DSM 13496 / JCM 10307 / IC-167).